A 129-amino-acid polypeptide reads, in one-letter code: Arsenate-mycothiol transferase ArsC2 (129 aa).

The protein belongs to the low molecular weight phosphotyrosine protein phosphatase family.

It localises to the cytoplasm. It catalyses the reaction mycothiol + arsenate = arseno-mycothiol + H2O. Involved in defense against toxic arsenate. Involved in the mycothiol/myoredoxin redox pathway which uses a mycothioltransferase mechanism; facilitates adduct formation between arsenate and mycothiol. This Corynebacterium glutamicum (strain ATCC 13032 / K051) protein is Arsenate-mycothiol transferase ArsC2 (arsC2).